The chain runs to 396 residues: Elongation factor Tu (396 aa).

The 196-residue stretch at 10-205 (KPHVNIGTIG…AVDESIPAPV (196 aa)) folds into the tr-type G domain. The G1 stretch occupies residues 19–26 (GHVDHGKT). 19–26 (GHVDHGKT) lines the GTP pocket. Thr26 serves as a coordination point for Mg(2+). A G2 region spans residues 62-66 (GITIN). Positions 83-86 (DAPG) are G3. Residues 83–87 (DAPGH) and 138–141 (NKSD) each bind GTP. A G4 region spans residues 138-141 (NKSD). Positions 175-177 (SAL) are G5.

Belongs to the TRAFAC class translation factor GTPase superfamily. Classic translation factor GTPase family. EF-Tu/EF-1A subfamily. In terms of assembly, monomer.

It localises to the cytoplasm. It catalyses the reaction GTP + H2O = GDP + phosphate + H(+). Its function is as follows. GTP hydrolase that promotes the GTP-dependent binding of aminoacyl-tRNA to the A-site of ribosomes during protein biosynthesis. This is Elongation factor Tu from Mycobacterium leprae (strain Br4923).